The chain runs to 178 residues: Actin-related protein 2/3 complex subunit 3 (178 aa).

Lysine 29 is covalently cross-linked (Glycyl lysine isopeptide (Lys-Gly) (interchain with G-Cter in ubiquitin)).

This sequence belongs to the ARPC3 family. In terms of assembly, component of the Arp2/3 complex composed of ARP2, ARP3, ARC40/p41-ARC, ARC35/p34-ARC, ARC18/p21-ARC, ARC19/p20-ARC and ARC16/p16-ARC.

The protein localises to the cytoplasm. It is found in the cytoskeleton. Its function is as follows. Functions as a component of the Arp2/3 complex which is involved in regulation of actin polymerization and together with an activating nucleation-promoting factor (NPF) mediates the formation of branched actin networks. This is Actin-related protein 2/3 complex subunit 3 (ARC18) from Saccharomyces cerevisiae (strain ATCC 204508 / S288c) (Baker's yeast).